The sequence spans 232 residues: T-cell surface glycoprotein CD1b-3 (232 aa).

Topologically, residues 1–201 (GLQEFQFEYP…LYWGHPMYIG (201 aa)) are extracellular. 3 cysteine pairs are disulfide-bonded: cysteine 19–cysteine 83, cysteine 48–cysteine 62, and cysteine 123–cysteine 178. Asparagine 45 is a glycosylation site (N-linked (GlcNAc...) asparagine). Positions 84-194 (PRYLLGVLDA…LGDQDIILYW (111 aa)) constitute an Ig-like domain. The chain crosses the membrane as a helical span at residues 202–222 (LIFVAIIVPSLILLICLALWF). At 223-232 (WRRWSYQTVL) the chain is on the cytoplasmic side.

In terms of assembly, heterodimer with B2M (beta-2-microglobulin). Interacts with saposin C.

The protein resides in the cell membrane. The protein localises to the endosome membrane. It is found in the lysosome membrane. Antigen-presenting protein that binds self and non-self lipid and glycolipid antigens and presents them to T-cell receptors on natural killer T-cells. The polypeptide is T-cell surface glycoprotein CD1b-3 (Ovis aries (Sheep)).